The following is a 360-amino-acid chain: DNA replication and repair protein RecF (360 aa).

Gly33 to Thr40 contributes to the ATP binding site.

The protein belongs to the RecF family.

The protein localises to the cytoplasm. The RecF protein is involved in DNA metabolism; it is required for DNA replication and normal SOS inducibility. RecF binds preferentially to single-stranded, linear DNA. It also seems to bind ATP. This is DNA replication and repair protein RecF from Rickettsia rickettsii (strain Iowa).